A 224-amino-acid chain; its full sequence is MSTAEQRLRLMQLASSNLPVGGYSWSQGLEWAVEAGWVPDVAAFERWQRRQMTEGFFTVDLPLFARLYRACEQGDIAAAQRWTAYLLACRETRELREEERNRGAAFARLLSDWQPDCPPPWRSLCQQSQLAGMAWLGVRWRIALPEMALSLGYSWIESAVMAGVKLVPFGQQAAQQLILRLCDHYAAEMPRALATPDGDIGSATPLAAIASARHETQYSRLFRS.

It belongs to the UreF family. UreD, UreF and UreG form a complex that acts as a GTP-hydrolysis-dependent molecular chaperone, activating the urease apoprotein by helping to assemble the nickel containing metallocenter of UreC. The UreE protein probably delivers the nickel.

The protein localises to the cytoplasm. Its function is as follows. Required for maturation of urease via the functional incorporation of the urease nickel metallocenter. This Klebsiella pneumoniae subsp. pneumoniae (strain ATCC 700721 / MGH 78578) protein is Urease accessory protein UreF.